A 73-amino-acid chain; its full sequence is Antimicrobial peptide 143 (73 aa).

A signal peptide spans 1–22; sequence MKVKCLLAVFLIVLIAAEHCQA. Lysine 38 carries the post-translational modification Lysine amide. Positions 44 to 73 are excised as a propeptide; it reads ELGTQFRPQQKNFMRREIDLERLFAEMPDY.

Belongs to the non-disulfide-bridged peptide (NDBP) superfamily. Short antimicrobial peptide (group 4) family. Expressed by the venom gland.

The protein resides in the secreted. It localises to the target cell membrane. Its function is as follows. Cationic host defense peptide that have antibacterial activity by breaking membranes. Is more effective on Gram-positive than on Gram-negative bacteria. In Lychas mucronatus (Chinese swimming scorpion), this protein is Antimicrobial peptide 143.